We begin with the raw amino-acid sequence, 109 residues long: Gliadoralin-A (109 aa).

The signal sequence occupies residues 1–16 (MLVILLMVVVLALSSA). Gln17 carries the pyrrolidone carboxylic acid modification. The segment at 17 to 109 (QDPNRDFVVS…PRYQQPRRAV (93 aa)) is disordered. Low complexity predominate over residues 35–109 (PSSQQGTVGG…PRYQQPRRAV (75 aa)). A propeptide spanning residues 107–109 (RAV) is cleaved from the precursor.

Predominantly proteolytically processed at its C-terminus before secretion to produce the major form gliadoralin A 1-90. Further proteloytically processed after secretion to produce minor forms. Potential substrate of transglutaminase. Found in saliva (at protein level). Secreted from the submandibular gland.

The protein resides in the secreted. May play a role in the formation of the protective mucosal protein pellicle involved in the reinforcement and protection of oral mucosal epithelial surface. The polypeptide is Gliadoralin-A (Rattus norvegicus (Rat)).